We begin with the raw amino-acid sequence, 480 residues long: Adenosylhomocysteinase (480 aa).

3 residues coordinate substrate: Thr-63, Asp-142, and Glu-203. Residue 204 to 206 (TTT) coordinates NAD(+). Substrate-binding residues include Lys-233 and Asp-237. Residues Asn-238, 267 to 272 (GYGDVG), Glu-290, Asn-325, 346 to 348 (IGH), and Asn-394 contribute to the NAD(+) site.

It belongs to the adenosylhomocysteinase family. Requires NAD(+) as cofactor.

The protein resides in the cytoplasm. It carries out the reaction S-adenosyl-L-homocysteine + H2O = L-homocysteine + adenosine. Its pathway is amino-acid biosynthesis; L-homocysteine biosynthesis; L-homocysteine from S-adenosyl-L-homocysteine: step 1/1. Its function is as follows. May play a key role in the regulation of the intracellular concentration of adenosylhomocysteine. The chain is Adenosylhomocysteinase from Xylella fastidiosa (strain M12).